Consider the following 519-residue polypeptide: Bifunctional dihydrofolate reductase-thymidylate synthase 1 (519 aa).

N-acetylalanine is present on alanine 2. Positions threonine 21 to arginine 198 constitute a DHFR domain. Valine 25 is a substrate binding site. NADP(+) contacts are provided by residues alanine 27 and glycine 33–lysine 39. Residue aspartate 47 coordinates substrate. NADP(+)-binding positions include arginine 71–threonine 73 and leucine 92–serine 95. Isoleucine 134 contributes to the substrate binding site. Residue glycine 135–glutamate 142 coordinates NADP(+). Threonine 155 lines the substrate pocket. The segment at serine 201–histidine 234 is hinge. The segment at glutamate 235 to valine 519 is thymidylate synthase. DUMP is bound at residue arginine 256. The active site involves cysteine 401. DUMP-binding positions include histidine 402, glutamine 420–aspartate 424, asparagine 432, and histidine 462–tyrosine 464.

The protein in the N-terminal section; belongs to the dihydrofolate reductase family. It in the C-terminal section; belongs to the thymidylate synthase family. As to quaternary structure, heterodimer or homodimer.

The enzyme catalyses (6S)-5,6,7,8-tetrahydrofolate + NADP(+) = 7,8-dihydrofolate + NADPH + H(+). It catalyses the reaction dUMP + (6R)-5,10-methylene-5,6,7,8-tetrahydrofolate = 7,8-dihydrofolate + dTMP. It participates in cofactor biosynthesis; tetrahydrofolate biosynthesis; 5,6,7,8-tetrahydrofolate from 7,8-dihydrofolate: step 1/1. In terms of biological role, bifunctional enzyme. Involved in de novo dTMP biosynthesis. Key enzyme in folate metabolism. Can play two different roles depending on the source of dihydrofolate: de novo synthesis of tetrahydrofolate or recycling of the dihydrofolate released as one of the end products of the TS catalyzed reaction. Catalyzes an essential reaction for de novo glycine and purine synthesis, DNA precursor synthesis, and for the conversion of dUMP to dTMP. This Arabidopsis thaliana (Mouse-ear cress) protein is Bifunctional dihydrofolate reductase-thymidylate synthase 1 (THY-1).